We begin with the raw amino-acid sequence, 42 residues long: MRDLKTYLSVAPVLSTLWFGSLAGLLIEINRFFPDALTFPFF.

Residues 7-27 traverse the membrane as a helical segment; sequence YLSVAPVLSTLWFGSLAGLLI.

This sequence belongs to the PsaJ family.

The protein localises to the plastid. It localises to the chloroplast thylakoid membrane. May help in the organization of the PsaE and PsaF subunits. The chain is Photosystem I reaction center subunit IX from Daucus carota (Wild carrot).